Reading from the N-terminus, the 113-residue chain is Hydrogenase maturation factor HypA (113 aa).

Ni(2+) is bound at residue histidine 2. Zn(2+) is bound by residues cysteine 73, cysteine 76, cysteine 89, and cysteine 92.

Belongs to the HypA/HybF family.

Functionally, involved in the maturation of [NiFe] hydrogenases. Required for nickel insertion into the metal center of the hydrogenase. In Prosthecochloris aestuarii (strain DSM 271 / SK 413), this protein is Hydrogenase maturation factor HypA.